Consider the following 607-residue polypeptide: Autophagy-related protein 16-1 (607 aa).

The tract at residues 13 to 43 (WKRHISEQLRRRDRLQRQAFEEIILQYNKLL) is interaction with ATG5. The stretch at 78 to 230 (NDNQLQEMAQ…QKELAEAAKE (153 aa)) forms a coiled coil. Serine 139 is modified (phosphoserine; by CK2). A WIPI2-binding region spans residues 207 to 230 (AENEKDSRRRQARLQKELAEAAKE). The tract at residues 230–242 (EPLPVEQDDDIEV) is RB1CC1-binding. Phosphoserine occurs at positions 269 and 287. The short motif at 296–299 (DNVD) is the Caspase cleavage element. WD repeat units follow at residues 320 to 359 (AHDG…CEFK), 364 to 403 (GSNA…LRHT), 406 to 445 (GHSG…CIKT), 447 to 484 (FAGS…IVRE), 486 to 525 (ELLG…IKQT), 532 to 573 (KCGS…KVLS), and 575 to 607 (QHSS…WAQY).

The protein belongs to the WD repeat ATG16 family. As to quaternary structure, homodimer. Homooligomer. Heterooligomer with ATG16L2. Interacts with WIPI1. Interacts with WIPI2. Interacts with RB1CC1; the interaction is required for ULK1 complex-dependent autophagy. Interacts with ATG5. Part of the minor complex composed of 4 sets of ATG12-ATG5 and ATG16L1 (400 kDa); this complex interacts with ATG3 leading to disruption of ATG7 interaction and promotion of ATG8-like proteins lipidation. Part of the major complex composed of 8 sets of ATG12-ATG5 and ATG16L1 (800 kDa). Interacts with RAB33B (GTP- and GDP-bound forms); the complex consists of a tetramer where two RAB33B molecules bind independently one molecule of the ATG16L1 homodimer; the interaction promotes ATG12-ATG5-ATG16L1 complex recruitment to phagophores. Interacts (via WD repeats) with TMEM59; the interaction mediates unconventional autophagic activity of TMEM59. Interacts with TLR2. Interacts (via WD repeats) with MEFV. Interacts with PPP1CA; the interaction dephosphorylates ATG16L1 causing dissociation of ATG12-ATG5-ATG16L1 complex. Interacts (via N-terminal) with CLTC. Interacts with NOD1. Interacts with NOD2. Interacts with TUFM. Interacts with TRIM16. Interacts (via WD repeats) with SPATA33. Interacts with IRGM. Post-translationally, proteolytic cleavage by activated CASP3 leads to degradation and may regulate autophagy upon cellular stress and apoptotic stimuli. In terms of processing, phosphorylation at Ser-139 promotes association with the ATG12-ATG5 conjugate to form the ATG12-ATG5-ATG16L1 complex.

It localises to the cytoplasm. The protein resides in the preautophagosomal structure membrane. It is found in the endosome membrane. Its subcellular location is the lysosome membrane. Its function is as follows. Plays an essential role in both canonical and non-canonical autophagy: interacts with ATG12-ATG5 to mediate the lipidation to ATG8 family proteins (MAP1LC3A, MAP1LC3B, MAP1LC3C, GABARAPL1, GABARAPL2 and GABARAP). Acts as a molecular hub, coordinating autophagy pathways via distinct domains that support either canonical or non-canonical signaling. During canonical autophagy, interacts with ATG12-ATG5 to mediate the conjugation of phosphatidylethanolamine (PE) to ATG8 proteins, to produce a membrane-bound activated form of ATG8. Thereby, controls the elongation of the nascent autophagosomal membrane. As part of the ATG8 conjugation system with ATG5 and ATG12, required for recruitment of LRRK2 to stressed lysosomes and induction of LRRK2 kinase activity in response to lysosomal stress. Also involved in non-canonical autophagy, a parallel pathway involving conjugation of ATG8 proteins to single membranes at endolysosomal compartments, probably by catalyzing conjugation of phosphatidylserine (PS) to ATG8. Non-canonical autophagy plays a key role in epithelial cells to limit lethal infection by influenza A (IAV) virus. Regulates mitochondrial antiviral signaling (MAVS)-dependent type I interferon (IFN-I) production. Negatively regulates NOD1- and NOD2-driven inflammatory cytokine response. Instead, promotes an autophagy-dependent antibacterial pathway together with NOD1 or NOD2. Plays a role in regulating morphology and function of Paneth cell. The polypeptide is Autophagy-related protein 16-1 (Homo sapiens (Human)).